Consider the following 427-residue polypeptide: Diaminobutyrate--2-oxoglutarate transaminase (427 aa).

Lys264 carries the post-translational modification N6-(pyridoxal phosphate)lysine.

This sequence belongs to the class-III pyridoxal-phosphate-dependent aminotransferase family. Pyridoxal 5'-phosphate is required as a cofactor.

It carries out the reaction L-2,4-diaminobutanoate + 2-oxoglutarate = L-aspartate 4-semialdehyde + L-glutamate. Its pathway is amine and polyamine biosynthesis; ectoine biosynthesis; L-ectoine from L-aspartate 4-semialdehyde: step 1/3. In terms of biological role, catalyzes reversively the conversion of L-aspartate beta-semialdehyde (ASA) to L-2,4-diaminobutyrate (DABA) by transamination with L-glutamate. This is Diaminobutyrate--2-oxoglutarate transaminase (ectB) from Wolinella succinogenes (strain ATCC 29543 / DSM 1740 / CCUG 13145 / JCM 31913 / LMG 7466 / NCTC 11488 / FDC 602W) (Vibrio succinogenes).